The following is a 235-amino-acid chain: Rab-like protein 3 (235 aa).

The interval 1–235 (MASLDRVKVL…GGNFKSLHYD (235 aa)) is small GTPase-like. GTP is bound by residues 16–21 (GVGKSS), 148–150 (KLD), and 179–180 (DC).

It belongs to the small GTPase superfamily. Rab family. In terms of assembly, homodimer.

Required for KRAS signaling regulation and modulation of cell proliferation. Regulator of KRAS prenylation, and probably prenylation of other small GTPases. Required for lymphocyte development and function. Not required for myeloid cell development. This Xenopus laevis (African clawed frog) protein is Rab-like protein 3 (rabl3).